The sequence spans 125 residues: ATP synthase epsilon chain (125 aa).

It belongs to the ATPase epsilon chain family. F-type ATPases have 2 components, CF(1) - the catalytic core - and CF(0) - the membrane proton channel. CF(1) has five subunits: alpha(3), beta(3), gamma(1), delta(1), epsilon(1). CF(0) has three main subunits: a, b and c.

It localises to the cell inner membrane. Produces ATP from ADP in the presence of a proton gradient across the membrane. The chain is ATP synthase epsilon chain from Aliarcobacter butzleri (strain RM4018) (Arcobacter butzleri).